Reading from the N-terminus, the 402-residue chain is Probable sugar efflux transporter (402 aa).

Transmembrane regions (helical) follow at residues 15–35 (VLIM…PVAM), 51–71 (GLMM…AMLA), 84–104 (LFII…FWIL), 109–129 (MCIA…VMRI), 137–157 (QALG…LPIG), 168–188 (VTFG…IRLL), 209–229 (PLLL…FTAY), 245–265 (NFAT…SLLF), 276–296 (FIVV…FSTE), 297–317 (AIIA…CIGL), 333–353 (VATA…ALFG), and 365–385 (IGYT…TTHL).

The protein belongs to the major facilitator superfamily. SotB (TC 2.A.1.2) family.

Its subcellular location is the cell inner membrane. In terms of biological role, involved in the efflux of sugars. The physiological role may be the reduction of the intracellular concentration of toxic sugars or sugar metabolites. In Haemophilus influenzae (strain 86-028NP), this protein is Probable sugar efflux transporter.